A 248-amino-acid chain; its full sequence is Triosephosphate isomerase (248 aa).

Substrate is bound by residues asparagine 10 and lysine 12. Histidine 95 serves as the catalytic Electrophile. Glutamate 165 serves as the catalytic Proton acceptor.

It belongs to the triosephosphate isomerase family. Homodimer.

It carries out the reaction D-glyceraldehyde 3-phosphate = dihydroxyacetone phosphate. Its pathway is carbohydrate biosynthesis; gluconeogenesis. It functions in the pathway carbohydrate degradation; glycolysis; D-glyceraldehyde 3-phosphate from glycerone phosphate: step 1/1. In Kluyveromyces lactis (strain ATCC 8585 / CBS 2359 / DSM 70799 / NBRC 1267 / NRRL Y-1140 / WM37) (Yeast), this protein is Triosephosphate isomerase (TPI1).